Here is a 161-residue protein sequence, read N- to C-terminus: 2-C-methyl-D-erythritol 2,4-cyclodiphosphate synthase (161 aa).

Residues Asp10 and His12 each contribute to the a divalent metal cation site. Residues Asp10 to His12 and His36 to Ser37 contribute to the 4-CDP-2-C-methyl-D-erythritol 2-phosphate site. His44 contributes to the a divalent metal cation binding site. 4-CDP-2-C-methyl-D-erythritol 2-phosphate contacts are provided by residues Asp58 to Gly60, Phe63 to Asp67, Ala102 to Ala108, Thr134 to Glu137, Phe141, and Arg144.

This sequence belongs to the IspF family. Homotrimer. Requires a divalent metal cation as cofactor.

The enzyme catalyses 4-CDP-2-C-methyl-D-erythritol 2-phosphate = 2-C-methyl-D-erythritol 2,4-cyclic diphosphate + CMP. It functions in the pathway isoprenoid biosynthesis; isopentenyl diphosphate biosynthesis via DXP pathway; isopentenyl diphosphate from 1-deoxy-D-xylulose 5-phosphate: step 4/6. In terms of biological role, involved in the biosynthesis of isopentenyl diphosphate (IPP) and dimethylallyl diphosphate (DMAPP), two major building blocks of isoprenoid compounds. Catalyzes the conversion of 4-diphosphocytidyl-2-C-methyl-D-erythritol 2-phosphate (CDP-ME2P) to 2-C-methyl-D-erythritol 2,4-cyclodiphosphate (ME-CPP) with a corresponding release of cytidine 5-monophosphate (CMP). This chain is 2-C-methyl-D-erythritol 2,4-cyclodiphosphate synthase, found in Shewanella sediminis (strain HAW-EB3).